Here is a 357-residue protein sequence, read N- to C-terminus: DNA replication and repair protein RecF (357 aa).

31–38 lines the ATP pocket; sequence GQNGAGKT.

It belongs to the RecF family.

Its subcellular location is the cytoplasm. Functionally, the RecF protein is involved in DNA metabolism; it is required for DNA replication and normal SOS inducibility. RecF binds preferentially to single-stranded, linear DNA. It also seems to bind ATP. In Coxiella burnetii (strain RSA 493 / Nine Mile phase I), this protein is DNA replication and repair protein RecF.